Reading from the N-terminus, the 1160-residue chain is Transcription factor tau 138 kDa subunit (1160 aa).

The segment at 475-533 (PNSKKTPNKNKRKRQVKNSTNASVAGNISNPKRIKLEQHVSTAQEPKSAEDSPSSNGGT) is disordered. Residues 480–490 (TPNKNKRKRQV) show a composition bias toward basic residues. Polar residues-rich tracts occupy residues 491 to 504 (KNSTNASVAGNISN) and 513 to 529 (HVSTAQEPKSAEDSPSS). Ser546 bears the Phosphoserine mark.

As to quaternary structure, component of the TFIIIC complex composed of TFC1, TFC3, TFC4, TFC6, TFC7 and TFC8. The subunits are organized in two globular domains, tauA and tauB, connected by a proteolysis-sensitive and flexible linker. Interacts with TFC1, TFC4 and TFC6.

Its subcellular location is the nucleus. The protein localises to the mitochondrion. TFIIIC mediates tRNA and 5S RNA gene activation by binding to intragenic promoter elements. Upstream of the transcription start site, TFIIIC assembles the initiation complex TFIIIB-TFIIIC-tDNA, which is sufficient for RNA polymerase III recruitment and function. Part of the tauB domain of TFIIIC that binds boxB DNA promoter sites of tRNA and similar genes. TFC3 is essential for cell viability. Cooperates with TFC6 in DNA binding. The protein is Transcription factor tau 138 kDa subunit (TFC3) of Saccharomyces cerevisiae (strain ATCC 204508 / S288c) (Baker's yeast).